Here is a 263-residue protein sequence, read N- to C-terminus: MKKIECIIMDWAGTAVDYGCFAPVAAFIKAFAGKGLTIDVEQTRKPMGLPKIQHIRELLTMPEVNEQFINRYRRAWTEEDVVELNHLFEKYLFASLKEYTDPIPGVIPTLEKLRAEGLKIGSTTGYTREMMDVVLPEAQAKGYRVDYCATPNLLPAGRPAPYMIFENLTKLAVPDPDTVVKVGDTIADIQEGVHAKVWSVGVVLGSNEMALTEEETHALPAAELENRIAEVKQRMLAAGASYVIRSIEELPALIQLINSKLNH.

Catalysis depends on Asp-10, which acts as the Nucleophile. The Mg(2+) site is built by Asp-10 and Ala-12. Lys-51 (schiff-base intermediate with substrate) is an active-site residue. Mg(2+) is bound at residue Asp-184.

The protein belongs to the HAD-like hydrolase superfamily. PhnX family. As to quaternary structure, homodimer. Mg(2+) is required as a cofactor.

It catalyses the reaction phosphonoacetaldehyde + H2O = acetaldehyde + phosphate + H(+). Functionally, involved in phosphonate degradation. This is Phosphonoacetaldehyde hydrolase from Bacteroides fragilis (strain ATCC 25285 / DSM 2151 / CCUG 4856 / JCM 11019 / LMG 10263 / NCTC 9343 / Onslow / VPI 2553 / EN-2).